The chain runs to 301 residues: Probable alpha-L-glutamate ligase 1 (301 aa).

Positions 104-287 constitute an ATP-grasp domain; the sequence is MQLMSRRGIG…VAGAIIEFVE (184 aa). ATP-binding positions include K141, 178–179, D187, and 211–213; these read EY and RSN. Mg(2+) contacts are provided by D248, E260, and N262. Mn(2+) is bound by residues D248, E260, and N262.

It belongs to the RimK family. Mg(2+) serves as cofactor. It depends on Mn(2+) as a cofactor.

This Shewanella putrefaciens (strain CN-32 / ATCC BAA-453) protein is Probable alpha-L-glutamate ligase 1.